We begin with the raw amino-acid sequence, 144 residues long: Large ribosomal subunit protein uL15 (144 aa).

A disordered region spans residues 1–49 (MKLNTLSPAAGAKSAAKRVGRGIGSGLGKTAGRGHKGQKSRSGGGVRVG). A compositionally biased stretch (gly residues) spans 21-31 (RGIGSGLGKTA).

This sequence belongs to the universal ribosomal protein uL15 family. In terms of assembly, part of the 50S ribosomal subunit.

In terms of biological role, binds to the 23S rRNA. The chain is Large ribosomal subunit protein uL15 from Shewanella loihica (strain ATCC BAA-1088 / PV-4).